A 604-amino-acid chain; its full sequence is Serine/threonine-protein phosphatase 2B catalytic subunit A2 (604 aa).

The tract at residues 21-48 is disordered; it reads NKTERPQSSTTPIDSKASTVAAANSTAT. Thr31 carries the post-translational modification Phosphothreonine. The segment covering 35–48 has biased composition (low complexity); that stretch reads SKASTVAAANSTAT. Asp144, His146, and Asp172 together coordinate Fe cation. Residues Asp172 and Asn204 each coordinate Zn(2+). His205 (proton donor) is an active-site residue. Zn(2+) contacts are provided by His253 and His359. The disordered stretch occupies residues 470–497; sequence KKLPQAGKSEATPQPATSASPKHASILD. Residues 480-489 show a composition bias toward polar residues; the sequence is ATPQPATSAS. Ser489 and Ser520 each carry phosphoserine. Residues 501 to 523 form a calmodulin-binding region; it reads RRKALRNKILAVAKVSRMYSVLR.

The protein belongs to the PPP phosphatase family. PP-2B subfamily. As to quaternary structure, composed of two components (A and B), the A component is the catalytic subunit and the B component confers calcium sensitivity. Fe(3+) serves as cofactor. Requires Zn(2+) as cofactor.

The catalysed reaction is O-phospho-L-seryl-[protein] + H2O = L-seryl-[protein] + phosphate. The enzyme catalyses O-phospho-L-threonyl-[protein] + H2O = L-threonyl-[protein] + phosphate. In terms of biological role, calcium-dependent, calmodulin-stimulated protein phosphatase. This subunit may have a role in the calmodulin activation of calcineurin. The chain is Serine/threonine-protein phosphatase 2B catalytic subunit A2 (CMP2) from Saccharomyces cerevisiae (strain ATCC 204508 / S288c) (Baker's yeast).